The following is a 305-amino-acid chain: UDP-3-O-acyl-N-acetylglucosamine deacetylase (305 aa).

Zn(2+) is bound by residues H79, H238, and D242. H265 (proton donor) is an active-site residue.

It belongs to the LpxC family. The cofactor is Zn(2+).

It carries out the reaction a UDP-3-O-[(3R)-3-hydroxyacyl]-N-acetyl-alpha-D-glucosamine + H2O = a UDP-3-O-[(3R)-3-hydroxyacyl]-alpha-D-glucosamine + acetate. It participates in glycolipid biosynthesis; lipid IV(A) biosynthesis; lipid IV(A) from (3R)-3-hydroxytetradecanoyl-[acyl-carrier-protein] and UDP-N-acetyl-alpha-D-glucosamine: step 2/6. In terms of biological role, catalyzes the hydrolysis of UDP-3-O-myristoyl-N-acetylglucosamine to form UDP-3-O-myristoylglucosamine and acetate, the committed step in lipid A biosynthesis. In Histophilus somni (strain 129Pt) (Haemophilus somnus), this protein is UDP-3-O-acyl-N-acetylglucosamine deacetylase.